The primary structure comprises 456 residues: Bacteriochlorophyllide d C-12(1)-methyltransferase (456 aa).

The Radical SAM core domain occupies 178 to 405 (HAKKYSQLIP…MFEPKKLGGE (228 aa)). Positions 194, 198, and 201 each coordinate [4Fe-4S] cluster.

This sequence belongs to the radical SAM superfamily. Requires [4Fe-4S] cluster as cofactor.

The protein localises to the cytoplasm. It catalyses the reaction 8-ethyl-12-methyl-3-vinylbacteriochlorophyllide d + S-adenosyl-L-methionine = 8,12-diethyl-3-vinylbacteriochlorophyllide d + S-adenosyl-L-homocysteine + H(+). It functions in the pathway porphyrin-containing compound metabolism; bacteriochlorophyll biosynthesis (light-independent). Involved in the biosynthesis of the major light-harvesting pigment bacteriochlorophyll c (BChlc), which confers a significant competitive advantage to green sulfur bacteria living at limiting red and near-infrared light intensities. BchR is a methyltransferase that adds a single methyl group to the methyl carbon at the C-12(1) position of 8-ethyl-12-methyl-3-vinylbacteriochlorophyllide d to yield 8,12-diethyl-3-vinylbacteriochlorophyllide d. The sequence is that of Bacteriochlorophyllide d C-12(1)-methyltransferase from Chlorobaculum tepidum (strain ATCC 49652 / DSM 12025 / NBRC 103806 / TLS) (Chlorobium tepidum).